A 239-amino-acid chain; its full sequence is Thymidylate kinase (239 aa).

10–17 (GVNRVGKS) provides a ligand contact to ATP.

Belongs to the thymidylate kinase family.

It catalyses the reaction dTMP + ATP = dTDP + ADP. It participates in pyrimidine metabolism; dTTP biosynthesis. Functionally, catalyzes the conversion of dTMP to dTDP. The sequence is that of Thymidylate kinase (TMK) from African swine fever virus (isolate Tick/South Africa/Pretoriuskop Pr4/1996) (ASFV).